The sequence spans 28 residues: Antibacterial protein LC3 (28 aa).

In terms of biological role, antibacterial activity against X.campestris, especially strain G, and P.solacearum PO1. The sequence is that of Antibacterial protein LC3 from Bacillus subtilis.